Consider the following 296-residue polypeptide: Homoserine kinase (296 aa).

Position 85 to 95 (85 to 95 (PLSRGLGSSAA)) interacts with ATP.

It belongs to the GHMP kinase family. Homoserine kinase subfamily.

It is found in the cytoplasm. The catalysed reaction is L-homoserine + ATP = O-phospho-L-homoserine + ADP + H(+). The protein operates within amino-acid biosynthesis; L-threonine biosynthesis; L-threonine from L-aspartate: step 4/5. Functionally, catalyzes the ATP-dependent phosphorylation of L-homoserine to L-homoserine phosphate. The sequence is that of Homoserine kinase from Clostridium acetobutylicum (strain ATCC 824 / DSM 792 / JCM 1419 / IAM 19013 / LMG 5710 / NBRC 13948 / NRRL B-527 / VKM B-1787 / 2291 / W).